A 303-amino-acid polypeptide reads, in one-letter code: Pantothenate synthetase (303 aa).

30 to 37 (MGYLHAGH) is a binding site for ATP. Histidine 37 serves as the catalytic Proton donor. A (R)-pantoate-binding site is contributed by glutamine 61. Glutamine 61 serves as a coordination point for beta-alanine. 147–150 (GAKD) contributes to the ATP binding site. (R)-pantoate is bound at residue glutamine 153. Residues valine 176 and 184 to 187 (LSSR) contribute to the ATP site.

Belongs to the pantothenate synthetase family. Homodimer.

It localises to the cytoplasm. It carries out the reaction (R)-pantoate + beta-alanine + ATP = (R)-pantothenate + AMP + diphosphate + H(+). The protein operates within cofactor biosynthesis; (R)-pantothenate biosynthesis; (R)-pantothenate from (R)-pantoate and beta-alanine: step 1/1. In terms of biological role, catalyzes the condensation of pantoate with beta-alanine in an ATP-dependent reaction via a pantoyl-adenylate intermediate. This chain is Pantothenate synthetase, found in Rhizobium johnstonii (strain DSM 114642 / LMG 32736 / 3841) (Rhizobium leguminosarum bv. viciae).